The sequence spans 564 residues: Adenine deaminase (564 aa).

This sequence belongs to the metallo-dependent hydrolases superfamily. Adenine deaminase family. Mn(2+) is required as a cofactor.

The enzyme catalyses adenine + H2O + H(+) = hypoxanthine + NH4(+). In Methylobacterium sp. (strain 4-46), this protein is Adenine deaminase.